We begin with the raw amino-acid sequence, 534 residues long: O-phosphoserine--tRNA(Cys) ligase (534 aa).

Residues 186 to 188 (HMT), 231 to 233 (SAS), 273 to 274 (YY), and asparagine 325 each bind substrate.

It belongs to the class-II aminoacyl-tRNA synthetase family. O-phosphoseryl-tRNA(Cys) synthetase subfamily. In terms of assembly, homotetramer. Interacts with SepCysS.

The catalysed reaction is tRNA(Cys) + O-phospho-L-serine + ATP = O-phospho-L-seryl-tRNA(Cys) + AMP + diphosphate. Functionally, catalyzes the attachment of O-phosphoserine (Sep) to tRNA(Cys). This Archaeoglobus fulgidus (strain ATCC 49558 / DSM 4304 / JCM 9628 / NBRC 100126 / VC-16) protein is O-phosphoserine--tRNA(Cys) ligase (sepS).